The chain runs to 391 residues: Polyketide synthase 3 (391 aa).

The active site involves C164.

Belongs to the thiolase-like superfamily. Chalcone/stilbene synthases family. Homodimer.

It catalyses the reaction (E)-4-coumaroyl-CoA + 3 malonyl-CoA + 3 H(+) = 2',4,4',6'-tetrahydroxychalcone + 3 CO2 + 4 CoA. Its pathway is secondary metabolite biosynthesis; flavonoid biosynthesis. Functionally, polyketide synthase producing p-coumaryltriacetic acid lactone (CTAL) and slightly naringenin chalcone. Can use p-coumaryl-CoA as substrate. This is Polyketide synthase 3 (PKS3) from Rubus idaeus (Raspberry).